A 245-amino-acid polypeptide reads, in one-letter code: 1-(5-phosphoribosyl)-5-[(5-phosphoribosylamino)methylideneamino] imidazole-4-carboxamide isomerase (245 aa).

The active-site Proton acceptor is the D7. D129 serves as the catalytic Proton donor.

It belongs to the HisA/HisF family.

The protein localises to the cytoplasm. The catalysed reaction is 1-(5-phospho-beta-D-ribosyl)-5-[(5-phospho-beta-D-ribosylamino)methylideneamino]imidazole-4-carboxamide = 5-[(5-phospho-1-deoxy-D-ribulos-1-ylimino)methylamino]-1-(5-phospho-beta-D-ribosyl)imidazole-4-carboxamide. Its pathway is amino-acid biosynthesis; L-histidine biosynthesis; L-histidine from 5-phospho-alpha-D-ribose 1-diphosphate: step 4/9. The protein is 1-(5-phosphoribosyl)-5-[(5-phosphoribosylamino)methylideneamino] imidazole-4-carboxamide isomerase of Shewanella amazonensis (strain ATCC BAA-1098 / SB2B).